Here is a 182-residue protein sequence, read N- to C-terminus: Large ribosomal subunit protein bL25 (182 aa).

The protein belongs to the bacterial ribosomal protein bL25 family. CTC subfamily. In terms of assembly, part of the 50S ribosomal subunit; part of the 5S rRNA/L5/L18/L25 subcomplex. Contacts the 5S rRNA. Binds to the 5S rRNA independently of L5 and L18.

This is one of the proteins that binds to the 5S RNA in the ribosome where it forms part of the central protuberance. The protein is Large ribosomal subunit protein bL25 of Borreliella burgdorferi (strain ATCC 35210 / DSM 4680 / CIP 102532 / B31) (Borrelia burgdorferi).